The sequence spans 372 residues: UDP-N-acetylglucosamine--N-acetylmuramyl-(pentapeptide) pyrophosphoryl-undecaprenol N-acetylglucosamine transferase (372 aa).

Residues Thr14–Gly16, Asn128, Arg169, Ser201, Ile257, and Gln302 contribute to the UDP-N-acetyl-alpha-D-glucosamine site.

Belongs to the glycosyltransferase 28 family. MurG subfamily.

It is found in the cell inner membrane. It catalyses the reaction di-trans,octa-cis-undecaprenyl diphospho-N-acetyl-alpha-D-muramoyl-L-alanyl-D-glutamyl-meso-2,6-diaminopimeloyl-D-alanyl-D-alanine + UDP-N-acetyl-alpha-D-glucosamine = di-trans,octa-cis-undecaprenyl diphospho-[N-acetyl-alpha-D-glucosaminyl-(1-&gt;4)]-N-acetyl-alpha-D-muramoyl-L-alanyl-D-glutamyl-meso-2,6-diaminopimeloyl-D-alanyl-D-alanine + UDP + H(+). The protein operates within cell wall biogenesis; peptidoglycan biosynthesis. In terms of biological role, cell wall formation. Catalyzes the transfer of a GlcNAc subunit on undecaprenyl-pyrophosphoryl-MurNAc-pentapeptide (lipid intermediate I) to form undecaprenyl-pyrophosphoryl-MurNAc-(pentapeptide)GlcNAc (lipid intermediate II). The polypeptide is UDP-N-acetylglucosamine--N-acetylmuramyl-(pentapeptide) pyrophosphoryl-undecaprenol N-acetylglucosamine transferase (Bacteroides thetaiotaomicron (strain ATCC 29148 / DSM 2079 / JCM 5827 / CCUG 10774 / NCTC 10582 / VPI-5482 / E50)).